The following is a 178-amino-acid chain: Large ribosomal subunit protein uL5 (178 aa).

It belongs to the universal ribosomal protein uL5 family. As to quaternary structure, part of the 50S ribosomal subunit; part of the 5S rRNA/L5/L18/L25 subcomplex. Contacts the 5S rRNA and the P site tRNA. Forms a bridge to the 30S subunit in the 70S ribosome.

Its function is as follows. This is one of the proteins that bind and probably mediate the attachment of the 5S RNA into the large ribosomal subunit, where it forms part of the central protuberance. In the 70S ribosome it contacts protein S13 of the 30S subunit (bridge B1b), connecting the 2 subunits; this bridge is implicated in subunit movement. Contacts the P site tRNA; the 5S rRNA and some of its associated proteins might help stabilize positioning of ribosome-bound tRNAs. The protein is Large ribosomal subunit protein uL5 of Acinetobacter baumannii (strain AB0057).